Consider the following 445-residue polypeptide: uncharacterized protein (445 aa).

The segment at 139-160 is disordered; it reads TESQKDLEYERKANKTKEENQQ.

This is an uncharacterized protein from Mycoplasma pneumoniae (strain ATCC 29342 / M129 / Subtype 1) (Mycoplasmoides pneumoniae).